Reading from the N-terminus, the 124-residue chain is Ribonuclease pancreatic (124 aa).

Substrate is bound by residues K7 and R10. H12 (proton acceptor) is an active-site residue. 4 cysteine pairs are disulfide-bonded: C26–C84, C40–C95, C58–C110, and C65–C72. N34 carries N-linked (GlcNAc...) asparagine glycosylation. Substrate-binding positions include 41–45, K66, and R85; that span reads KPVNT. The active-site Proton donor is the H119.

This sequence belongs to the pancreatic ribonuclease family. Monomer. Interacts with and forms tight 1:1 complexes with RNH1. Dimerization of two such complexes may occur. Interaction with RNH1 inhibits this protein. As to expression, pancreas.

It localises to the secreted. The enzyme catalyses an [RNA] containing cytidine + H2O = an [RNA]-3'-cytidine-3'-phosphate + a 5'-hydroxy-ribonucleotide-3'-[RNA].. It catalyses the reaction an [RNA] containing uridine + H2O = an [RNA]-3'-uridine-3'-phosphate + a 5'-hydroxy-ribonucleotide-3'-[RNA].. Its function is as follows. Endonuclease that catalyzes the cleavage of RNA on the 3' side of pyrimidine nucleotides. Acts on single-stranded and double-stranded RNA. This Eudorcas thomsonii (Thomson's gazelle) protein is Ribonuclease pancreatic (RNASE1).